The following is a 283-amino-acid chain: Pantothenate synthetase (283 aa).

34 to 41 (MGALHDGH) is an ATP binding site. The active-site Proton donor is the His-41. (R)-pantoate is bound at residue Gln-65. Gln-65 provides a ligand contact to beta-alanine. 152 to 155 (GEKD) serves as a coordination point for ATP. Residue Gln-158 participates in (R)-pantoate binding. Residues Val-181 and 189-192 (MSSR) contribute to the ATP site.

Belongs to the pantothenate synthetase family. Homodimer.

The protein localises to the cytoplasm. It carries out the reaction (R)-pantoate + beta-alanine + ATP = (R)-pantothenate + AMP + diphosphate + H(+). It participates in cofactor biosynthesis; (R)-pantothenate biosynthesis; (R)-pantothenate from (R)-pantoate and beta-alanine: step 1/1. In terms of biological role, catalyzes the condensation of pantoate with beta-alanine in an ATP-dependent reaction via a pantoyl-adenylate intermediate. The polypeptide is Pantothenate synthetase (Rhodopseudomonas palustris (strain BisB18)).